The primary structure comprises 482 residues: tRNA sulfurtransferase (482 aa).

Residues 61–165 enclose the THUMP domain; the sequence is LAIRDALTRI…DDRLLLIKGR (105 aa). Residues 183–184, K265, G287, and Q296 each bind ATP; that span reads LI. C344 and C456 are oxidised to a cystine. Positions 404 to 482 constitute a Rhodanese domain; sequence FGANDVILDI…GFANVKVYRP (79 aa). C456 functions as the Cysteine persulfide intermediate in the catalytic mechanism.

Belongs to the ThiI family.

It is found in the cytoplasm. It carries out the reaction [ThiI sulfur-carrier protein]-S-sulfanyl-L-cysteine + a uridine in tRNA + 2 reduced [2Fe-2S]-[ferredoxin] + ATP + H(+) = [ThiI sulfur-carrier protein]-L-cysteine + a 4-thiouridine in tRNA + 2 oxidized [2Fe-2S]-[ferredoxin] + AMP + diphosphate. The catalysed reaction is [ThiS sulfur-carrier protein]-C-terminal Gly-Gly-AMP + S-sulfanyl-L-cysteinyl-[cysteine desulfurase] + AH2 = [ThiS sulfur-carrier protein]-C-terminal-Gly-aminoethanethioate + L-cysteinyl-[cysteine desulfurase] + A + AMP + 2 H(+). The protein operates within cofactor biosynthesis; thiamine diphosphate biosynthesis. Its function is as follows. Catalyzes the ATP-dependent transfer of a sulfur to tRNA to produce 4-thiouridine in position 8 of tRNAs, which functions as a near-UV photosensor. Also catalyzes the transfer of sulfur to the sulfur carrier protein ThiS, forming ThiS-thiocarboxylate. This is a step in the synthesis of thiazole, in the thiamine biosynthesis pathway. The sulfur is donated as persulfide by IscS. This is tRNA sulfurtransferase from Salmonella typhi.